A 489-amino-acid polypeptide reads, in one-letter code: Betaine aldehyde dehydrogenase (489 aa).

T26 and D93 together coordinate K(+). Residue G150 to W152 participates in NAD(+) binding. The active-site Charge relay system is the K162. K176–E179 contributes to the NAD(+) binding site. Residue V180 participates in K(+) binding. G229 to T232 contacts NAD(+). Residue L245 coordinates K(+). The Proton acceptor role is filled by E251. 3 residues coordinate NAD(+): G253, C285, and E386. C285 serves as the catalytic Nucleophile. C285 is subject to Cysteine sulfenic acid (-SOH). Residues K456 and G459 each coordinate K(+). E463 (charge relay system) is an active-site residue.

The protein belongs to the aldehyde dehydrogenase family. In terms of assembly, dimer of dimers. Requires K(+) as cofactor.

It catalyses the reaction betaine aldehyde + NAD(+) + H2O = glycine betaine + NADH + 2 H(+). Its pathway is amine and polyamine biosynthesis; betaine biosynthesis via choline pathway; betaine from betaine aldehyde: step 1/1. In terms of biological role, involved in the biosynthesis of the osmoprotectant glycine betaine. Catalyzes the irreversible oxidation of betaine aldehyde to the corresponding acid. This chain is Betaine aldehyde dehydrogenase, found in Burkholderia pseudomallei (strain 1106a).